The primary structure comprises 164 residues: MTDTFWAFVGLVLFLALLVYFEVPEMVLRHLDTRAKRIKDELDEALRLREEAQEVLAEYQRKHAEAEKDAQEIIAAAKREVEAVISEARIKAEEYVKNRNKLAEQKIAQAEADAIRMVSSSAIDLAVSAARVLIEKELDSHKANELIKESLVQESLTKMKTYLN.

A helical membrane pass occupies residues T4–P24.

It belongs to the ATPase B chain family. As to quaternary structure, F-type ATPases have 2 components, F(1) - the catalytic core - and F(0) - the membrane proton channel. F(1) has five subunits: alpha(3), beta(3), gamma(1), delta(1), epsilon(1). F(0) has three main subunits: a(1), b(2) and c(10-14). The alpha and beta chains form an alternating ring which encloses part of the gamma chain. F(1) is attached to F(0) by a central stalk formed by the gamma and epsilon chains, while a peripheral stalk is formed by the delta and b chains.

The protein resides in the cell inner membrane. In terms of biological role, f(1)F(0) ATP synthase produces ATP from ADP in the presence of a proton or sodium gradient. F-type ATPases consist of two structural domains, F(1) containing the extramembraneous catalytic core and F(0) containing the membrane proton channel, linked together by a central stalk and a peripheral stalk. During catalysis, ATP synthesis in the catalytic domain of F(1) is coupled via a rotary mechanism of the central stalk subunits to proton translocation. Functionally, component of the F(0) channel, it forms part of the peripheral stalk, linking F(1) to F(0). In Bartonella henselae (strain ATCC 49882 / DSM 28221 / CCUG 30454 / Houston 1) (Rochalimaea henselae), this protein is ATP synthase subunit b 2.